The following is a 149-amino-acid chain: MSKTLSFKTYSAKPADVERKWYVIDAEGQVLGRMAAEIARVLRGKHKPQFTPHVDTGDFIVVTNAEKVALSGNKENLKTYFSHSHYPGGVRVDSVKDLLRKKPEKIIEHAVWGMLPHNNLGRQLFRKLKVYAGTQHPHEAQAPTEMKIH.

It belongs to the universal ribosomal protein uL13 family. Part of the 50S ribosomal subunit.

In terms of biological role, this protein is one of the early assembly proteins of the 50S ribosomal subunit, although it is not seen to bind rRNA by itself. It is important during the early stages of 50S assembly. The polypeptide is Large ribosomal subunit protein uL13 (Chlorobium luteolum (strain DSM 273 / BCRC 81028 / 2530) (Pelodictyon luteolum)).